The primary structure comprises 215 residues: Cytochrome c biogenesis ATP-binding export protein CcmA (215 aa).

The ABC transporter domain maps to 3–215 (LEAENLAGER…MAAFSVEDIA (213 aa)). 35 to 42 (GPNGSGKS) provides a ligand contact to ATP.

Belongs to the ABC transporter superfamily. CcmA exporter (TC 3.A.1.107) family. In terms of assembly, the complex is composed of two ATP-binding proteins (CcmA) and two transmembrane proteins (CcmB).

It localises to the cell inner membrane. The catalysed reaction is heme b(in) + ATP + H2O = heme b(out) + ADP + phosphate + H(+). Part of the ABC transporter complex CcmAB involved in the biogenesis of c-type cytochromes; once thought to export heme, this seems not to be the case, but its exact role is uncertain. Responsible for energy coupling to the transport system. This chain is Cytochrome c biogenesis ATP-binding export protein CcmA, found in Brucella melitensis biotype 1 (strain ATCC 23456 / CCUG 17765 / NCTC 10094 / 16M).